The primary structure comprises 114 residues: Fluoride-specific ion channel FluC 1 (114 aa).

A run of 4 helical transmembrane segments spans residues 3 to 23 (IDIKNNTFFLISLGAFLGALF), 30 to 50 (IFIVNLIGCFLLGFFNSLNIL), 55 to 75 (LTLCVGLCGSMTTFSSWMSHL), and 87 to 107 (FLLNSLSIVLMGVLSIALGHI). 2 residues coordinate Na(+): G63 and T66.

It belongs to the fluoride channel Fluc/FEX (TC 1.A.43) family.

It is found in the cell inner membrane. It catalyses the reaction fluoride(in) = fluoride(out). Its activity is regulated as follows. Na(+) is not transported, but it plays an essential structural role and its presence is essential for fluoride channel function. In terms of biological role, fluoride-specific ion channel. Important for reducing fluoride concentration in the cell, thus reducing its toxicity. The protein is Fluoride-specific ion channel FluC 1 of Prochlorococcus marinus (strain NATL2A).